The primary structure comprises 282 residues: Bis(5'-nucleosyl)-tetraphosphatase, symmetrical (282 aa).

This sequence belongs to the Ap4A hydrolase family.

The catalysed reaction is P(1),P(4)-bis(5'-adenosyl) tetraphosphate + H2O = 2 ADP + 2 H(+). In terms of biological role, hydrolyzes diadenosine 5',5'''-P1,P4-tetraphosphate to yield ADP. This is Bis(5'-nucleosyl)-tetraphosphatase, symmetrical from Klebsiella pneumoniae (strain 342).